The sequence spans 112 residues: Ribosome-binding factor A (112 aa).

Belongs to the RbfA family. Monomer. Binds 30S ribosomal subunits, but not 50S ribosomal subunits or 70S ribosomes.

The protein resides in the cytoplasm. One of several proteins that assist in the late maturation steps of the functional core of the 30S ribosomal subunit. Associates with free 30S ribosomal subunits (but not with 30S subunits that are part of 70S ribosomes or polysomes). Required for efficient processing of 16S rRNA. May interact with the 5'-terminal helix region of 16S rRNA. This chain is Ribosome-binding factor A, found in Mycoplasma genitalium (strain ATCC 33530 / DSM 19775 / NCTC 10195 / G37) (Mycoplasmoides genitalium).